Reading from the N-terminus, the 713-residue chain is Nucleoporin NUP82 (713 aa).

The interaction with NUP116 stretch occupies residues 1 to 409; sequence MSQSSRLSAL…SDLNPLAGLK (409 aa). Positions 463–713 are interaction with NSP1 and NUP159; that stretch reads TSISTEKSDT…VSQEFTTKTQ (251 aa). A coiled-coil region spans residues 582–713; sequence EAQNKKWDAQ…VSQEFTTKTQ (132 aa). Positions 607–623 match the Bipartite nuclear localization signal motif; it reads KKLSQIAESNKFKEKKI.

In terms of assembly, component of the nuclear pore complex (NPC). NPC constitutes the exclusive means of nucleocytoplasmic transport. NPCs allow the passive diffusion of ions and small molecules and the active, nuclear transport receptor-mediated bidirectional transport of macromolecules such as proteins, RNAs, ribonucleoparticles (RNPs), and ribosomal subunits across the nuclear envelope. Due to its 8-fold rotational symmetry, all subunits are present with 8 copies or multiples thereof. NUP82 is part of the NUP82 subcomplex. This subcomplex is the base for interactions with NUP116 and GLE2, with NUP42 and GLE1 and with DYN2.

The protein localises to the nucleus. It is found in the nuclear pore complex. It localises to the nucleus membrane. In terms of biological role, functions as a component of the nuclear pore complex (NPC). NPC components, collectively referred to as nucleoporins (NUPs), can play the role of both NPC structural components and of docking or interaction partners for transiently associated nuclear transport factors. It is specifically involved as part of the NUP82-NUP159-NSP1 subcomplex in nuclear mRNA and pre-ribosome export by acting as a linker tethering nucleoporins that are directly involved in nuclear transport to the NPC via its coiled-coil domain. This chain is Nucleoporin NUP82 (NUP82), found in Saccharomyces cerevisiae (strain ATCC 204508 / S288c) (Baker's yeast).